Consider the following 440-residue polypeptide: Tyrosine--tRNA ligase (440 aa).

Residue tyrosine 46 coordinates L-tyrosine. Residues 51-60 (PTAPSLHIGN) carry the 'HIGH' region motif. Residues tyrosine 181 and glutamine 185 each coordinate L-tyrosine. A 'KMSKS' region motif is present at residues 241–245 (KFGKS). Lysine 244 contributes to the ATP binding site. The region spanning 373–430 (DRIAQAGVSAGLFKSISEARKTIKSGGVYVNNVRVEDEEQLLGDGDFLKGRFVVLRRG) is the S4 RNA-binding domain.

This sequence belongs to the class-I aminoacyl-tRNA synthetase family. TyrS type 1 subfamily. Homodimer.

The protein localises to the cytoplasm. It carries out the reaction tRNA(Tyr) + L-tyrosine + ATP = L-tyrosyl-tRNA(Tyr) + AMP + diphosphate + H(+). Functionally, catalyzes the attachment of tyrosine to tRNA(Tyr) in a two-step reaction: tyrosine is first activated by ATP to form Tyr-AMP and then transferred to the acceptor end of tRNA(Tyr). This Bifidobacterium animalis subsp. lactis (strain AD011) protein is Tyrosine--tRNA ligase.